Reading from the N-terminus, the 180-residue chain is UPF0397 protein SSA_0592 (180 aa).

5 helical membrane passes run 9–29 (VVAT…NIPT), 45–65 (LFSV…GHAI), 72–92 (GGLW…VGFF), 113–133 (LIQF…DVIV), and 146–166 (IVAI…LLTA).

The protein belongs to the UPF0397 family.

The protein localises to the cell membrane. This chain is UPF0397 protein SSA_0592, found in Streptococcus sanguinis (strain SK36).